Here is a 353-residue protein sequence, read N- to C-terminus: tRNA-specific 2-thiouridylase MnmA 2 (353 aa).

ATP contacts are provided by residues 9–16 and M35; that span reads AMSGGVDS. C98 (nucleophile) is an active-site residue. A disulfide bridge connects residues C98 and C194. G122 lines the ATP pocket. The interaction with tRNA stretch occupies residues 144–146; that stretch reads KDQ. The active-site Cysteine persulfide intermediate is the C194. The interval 300–301 is interaction with tRNA; that stretch reads RY.

Belongs to the MnmA/TRMU family.

It is found in the cytoplasm. The catalysed reaction is S-sulfanyl-L-cysteinyl-[protein] + uridine(34) in tRNA + AH2 + ATP = 2-thiouridine(34) in tRNA + L-cysteinyl-[protein] + A + AMP + diphosphate + H(+). Functionally, catalyzes the 2-thiolation of uridine at the wobble position (U34) of tRNA, leading to the formation of s(2)U34. The chain is tRNA-specific 2-thiouridylase MnmA 2 from Clostridium botulinum (strain Loch Maree / Type A3).